A 955-amino-acid chain; its full sequence is MSRFFAGGSDSDSDSSSDSEPVIRQQVAQFTFSDEEEDVKRVVRSKKEKRYEDLSNIIKSIRNHKKIKDMSSVLTSFEEFMRAYTKALPVVMKEENGVTPRIVVRALAELEDFVNESWDDKESRKNLSKNNNKALGTLRQKFRKYIKDFESDMKRFRAAPEDFAEEEEDDEREDEKGSDEEEEKVVVQVEPKAVSFKKEPEKAKPVKPVADSDSSDWGSDSDSDSTSSDEDAKYTSIRDRFLKKPEKGTEEIASAPSGVSGDDAFKKEKKKKTGEALSKKKKPKQDEMFDENEEEEEGWKVVNGTRSGASEQPKMFAKDAEIDTKLVVNKLNEVMAARGKKRTDRKMQIEFLRELRTVAETNNLGPAVAVKIRFNIVSAIFDYNPKVSGAMKLEHWSKLLEEIQELLKLLLAHEDVHLSESILDEYEEYDTAPFKIRGCMLTAVERLDDEFTKLLKECDPHSNEYVDRLKDEVPVTNIIEQVVTYVERLGNEMEICRIYLRKIDHLYYKFDPDVLKKRKGQLPANTITSVEEMDKLCRYIYAKDQTDRLRTRAILSHIFHHALHDNWFQARDLVLMSHLQETIHHSDPATQILYNRMMANLGLCAFRHGNIKDAHLCLVDLMMTGKPKELLAQGLVPQRQHERSLEQEKIEKQRQMPFHMHINLELLECVYLVSAMLLEIPYMAAHEFDARRRMISKTFYQQLRSSERQSLVGPPESMREHVVAAAKAMRHGDWNACANFIVNKKMNVKVWDLFYEANRVREMMIKFIKEESLRTYLFTYSNVFASISVPHLADMFKLPKSKVHSLISKMIINEELMASLDDPTETIVMHRSEPSRLQALSMQLADKVTNLVDANERIFEMKQGNFFQRGGNQGYNRDRQNYRNQNQNQNWNNNRRQDNRNRGNRGNQNRGEGREQREHHRDHHRDQREHREHQNREFREQREQMRNVEYQNKAE.

2 disordered regions span residues 1-22 (MSRF…SEPV) and 157-299 (RAAP…EEGW). Over residues 162 to 183 (DFAEEEEDDEREDEKGSDEEEE) the composition is skewed to acidic residues. The span at 206-218 (VKPVADSDSSDWG) shows a compositional bias: low complexity. The segment covering 219 to 229 (SDSDSDSTSSD) has biased composition (acidic residues). A compositionally biased stretch (basic and acidic residues) spans 230–250 (EDAKYTSIRDRFLKKPEKGTE). A compositionally biased stretch (acidic residues) spans 288–297 (MFDENEEEEE). The 177-residue stretch at 658-834 (FHMHINLELL…ETIVMHRSEP (177 aa)) folds into the PCI domain. The segment at 865–955 (NFFQRGGNQG…RNVEYQNKAE (91 aa)) is disordered. The segment covering 882 to 894 (YRNQNQNQNWNNN) has biased composition (low complexity). Residues 911–955 (GEGREQREHHRDHHRDQREHREHQNREFREQREQMRNVEYQNKAE) show a composition bias toward basic and acidic residues.

The protein belongs to the eIF-3 subunit C family. Component of the eukaryotic translation initiation factor 3 (eIF-3) complex.

The protein localises to the cytoplasm. In terms of biological role, component of the eukaryotic translation initiation factor 3 (eIF-3) complex, which is involved in protein synthesis of a specialized repertoire of mRNAs and, together with other initiation factors, stimulates binding of mRNA and methionyl-tRNAi to the 40S ribosome. The eIF-3 complex specifically targets and initiates translation of a subset of mRNAs involved in cell proliferation. The sequence is that of Eukaryotic translation initiation factor 3 subunit C from Anopheles gambiae (African malaria mosquito).